The following is a 575-amino-acid chain: Carboxylesterase 5A (575 aa).

The signal sequence occupies residues 1-28; sequence MSGDWVRPGQALIWVIWIFGAIIEGSVT. A disulfide bond links C94 and C121. N134 carries N-linked (GlcNAc...) asparagine glycosylation. Catalysis depends on S226, which acts as the Acyl-ester intermediate. The cysteines at positions 280 and 291 are disulfide-linked. A glycan (N-linked (GlcNAc...) asparagine) is linked at N281. The Charge relay system role is filled by E345. N363 carries N-linked (GlcNAc...) asparagine glycosylation. H454 acts as the Charge relay system in catalysis. N524 carries N-linked (GlcNAc...) asparagine glycosylation.

It belongs to the type-B carboxylesterase/lipase family. In terms of processing, N-glycosylated.

It localises to the secreted. The catalysed reaction is a carboxylic ester + H2O = an alcohol + a carboxylate + H(+). In terms of biological role, involved in the detoxification of xenobiotics and in the activation of ester and amide prodrugs. The chain is Carboxylesterase 5A (Ces5a) from Mus musculus (Mouse).